Reading from the N-terminus, the 325-residue chain is Iodotyrosine dehalogenase 1 homolog (325 aa).

The chain crosses the membrane as a helical span at residues 42 to 62 (VLNVLFTLGVILFVIYQVASL). The Cytoplasmic portion of the chain corresponds to 63 to 325 (LHRMNKRVEK…KPVEHITKLY (263 aa)). FMN-binding positions include 135–139 (RRSCR), 163–164 (SV), 273–275 (VTS), and Arg315.

This sequence belongs to the nitroreductase family. FMN is required as a cofactor. Expressed in body-wall, anal depressor and vulval muscles.

It is found in the membrane. Functionally, may contribute to coordination of muscle contraction as regulatory subunit of the nonessential sup-9 potassium channel complex. May act downstream of sup-10. The polypeptide is Iodotyrosine dehalogenase 1 homolog (Caenorhabditis elegans).